We begin with the raw amino-acid sequence, 591 residues long: MRTNYCGQLNLSHVGQEVTLCGWVHRRRDLGGLIFIDLRDREGVVQVFFDPDHQDAFRQASELRNEFCVQVTGTVRARPESQRNSEMPTGEIEVFGHGLTLINRAEPLPLDFNQTNSEENRLKYRYLDLRRPEMAARLKTRAKITAFVRRFMDNHGFLDIETPMLTKATPEGARDYLVPSRVHKGKFYALPQSPQLFKQLLMMSGFDRYYQIVKCFRDEDLRADRQPEFTQIDVETSFMSAGQVREIMEALARALWMEIKGVDLGDFPVMTFAEAMRRFGSDKPDLRNPLELVDVADLVKSVDFKVFSGPANDARGRVIALRVPGGATLTRKNIDEYGQFVGIYGAKGLAWMKVNDRAAGMDGVQSPIAKFLNAEVLEGILARSGAQSGDIIFFGADSAKVATDAMGALRLKVGRDLQLTDESRWAPLWVVDFPMFEEDGEGGLAAMHHPFTSPRDISPEALKANPVGAIANAYDMVMNGYEVGGGSVRIHSGAMQSAVFDILGINEQEQREKFGFLLDALKFGTPPHAGLAFGLDRLVMLLTGTENIRDVIAFPKTTAAACPLTDAPSRANPAALQELSIAVCAKQGSDA.

Residue E171 participates in L-aspartate binding. The interval Q195 to K198 is aspartate. An L-aspartate-binding site is contributed by R217. Residues R217–E219 and Q226 each bind ATP. H448 serves as a coordination point for L-aspartate. E482 is a binding site for ATP. R489 is a binding site for L-aspartate. An ATP-binding site is contributed by G534 to R537.

This sequence belongs to the class-II aminoacyl-tRNA synthetase family. Type 1 subfamily. In terms of assembly, homodimer.

It is found in the cytoplasm. It catalyses the reaction tRNA(Asp) + L-aspartate + ATP = L-aspartyl-tRNA(Asp) + AMP + diphosphate. In terms of biological role, catalyzes the attachment of L-aspartate to tRNA(Asp) in a two-step reaction: L-aspartate is first activated by ATP to form Asp-AMP and then transferred to the acceptor end of tRNA(Asp). This Edwardsiella ictaluri (strain 93-146) protein is Aspartate--tRNA ligase.